The chain runs to 91 residues: Probable Fe(2+)-trafficking protein (91 aa).

The protein belongs to the Fe(2+)-trafficking protein family.

In terms of biological role, could be a mediator in iron transactions between iron acquisition and iron-requiring processes, such as synthesis and/or repair of Fe-S clusters in biosynthetic enzymes. This Thiobacillus denitrificans (strain ATCC 25259 / T1) protein is Probable Fe(2+)-trafficking protein.